Reading from the N-terminus, the 155-residue chain is Small ribosomal subunit protein uS7c (155 aa).

Belongs to the universal ribosomal protein uS7 family. Part of the 30S ribosomal subunit.

It localises to the plastid. In terms of biological role, one of the primary rRNA binding proteins, it binds directly to 16S rRNA where it nucleates assembly of the head domain of the 30S subunit. In Aneura mirabilis (Parasitic liverwort), this protein is Small ribosomal subunit protein uS7c (rps7).